A 496-amino-acid chain; its full sequence is FAD-linked oxidoreductase AFUA_1G00980 (496 aa).

The first 21 residues, 1 to 21, serve as a signal peptide directing secretion; it reads MRRATLIPLAIWVAGAAAAAA. N-linked (GlcNAc...) asparagine glycans are attached at residues Asn-49, Asn-122, Asn-205, Asn-258, Asn-344, Asn-351, Asn-371, and Asn-382. One can recognise an FAD-binding PCMH-type domain in the interval 64–243; it reads MAPTYAVSVR…VEAVYQVTDL (180 aa).

It belongs to the oxygen-dependent FAD-linked oxidoreductase family. FAD is required as a cofactor.

Its function is as follows. FAD-linked oxidoreductase; part of the gene cluster that mediates the biosynthesis of fumigermin that inhibits germination of spores of the inducing S.rapamycinicus, and thus helps the fungus to defend resources in the shared habitat against a bacterial competitor. The partially reducing polyketide synthase fngA alone is sufficient for the production of fumigermin. FgnA catalyzes the condensation of 3 malonyl-CoA units to an acetyl-CoA starter, and 3 methylations to yield fumigermin. It is remarkable that the five cluster genes including fgnA are conserved in distantly related fungi, supporting the assumption of a fumigermin cluster; it is thus possible that originally all five genes were functional, but that the genes encoding tailoring enzymes became inactive from mutations, similar to the case of the fgnA gene in strains A1163 and Af293. This Aspergillus fumigatus (strain ATCC MYA-4609 / CBS 101355 / FGSC A1100 / Af293) (Neosartorya fumigata) protein is FAD-linked oxidoreductase AFUA_1G00980.